A 148-amino-acid polypeptide reads, in one-letter code: Gametocyte-specific factor 1-like (148 aa).

2 CHHC U11-48K-type zinc fingers span residues F6–N33 and M40–S67. Residues C9, H15, H25, C29, C43, H49, H59, and C63 each coordinate Zn(2+). Residues S67–P99 are disordered. The span at P82–S95 shows a compositional bias: polar residues.

This sequence belongs to the UPF0224 (FAM112) family.

The polypeptide is Gametocyte-specific factor 1-like (GTSF1L) (Homo sapiens (Human)).